Consider the following 148-residue polypeptide: 18 kDa antigen (148 aa).

The sHSP domain occupies 21–131 (TSARPAVMPM…KPRKISVDRG (111 aa)).

Belongs to the small heat shock protein (HSP20) family.

In terms of biological role, not known. This protein is one of the major immune reactive proteins in mycobacteria. This chain is 18 kDa antigen (hsp18), found in Mycobacterium leprae (strain TN).